Reading from the N-terminus, the 391-residue chain is Oxygen-dependent coproporphyrinogen-III oxidase, chloroplastic (391 aa).

Positions 1–13 (MASSLLTTPSQTL) are enriched in polar residues. The interval 1–34 (MASSLLTTPSQTLAPNPAAARARRSSPAAAQVSF) is disordered. A compositionally biased stretch (low complexity) spans 14 to 30 (APNPAAARARRSSPAAA). The important for dimerization stretch occupies residues 125-134 (VLQDGNVFEK). Ser179 provides a ligand contact to substrate. His193 functions as the Proton donor in the catalytic mechanism. Residues 195–197 (NYR) and 349–354 (GGRIES) contribute to the substrate site. The important for dimerization stretch occupies residues 331–366 (YVEFNLVYDRGTTFGLKTGGRIESILVSLPLTARWE).

Belongs to the aerobic coproporphyrinogen-III oxidase family. In terms of assembly, homodimer.

It is found in the plastid. The protein localises to the chloroplast. The enzyme catalyses coproporphyrinogen III + O2 + 2 H(+) = protoporphyrinogen IX + 2 CO2 + 2 H2O. Its pathway is porphyrin-containing compound metabolism; protoporphyrin-IX biosynthesis; protoporphyrinogen-IX from coproporphyrinogen-III (O2 route): step 1/1. In terms of biological role, involved in the heme and chlorophyll biosynthesis. Catalyzes the aerobic oxidative decarboxylation of propionate groups of rings A and B of coproporphyrinogen-III to yield the vinyl groups in protoporphyrinogen-IX. This chain is Oxygen-dependent coproporphyrinogen-III oxidase, chloroplastic (CPX), found in Hordeum vulgare (Barley).